The sequence spans 446 residues: Tubulin beta chain (446 aa).

Positions 11, 69, 138, 142, 143, 144, 204, and 226 each coordinate GTP. Glu-69 is a binding site for Mg(2+). The interval 422-446 (YQQYQDAGIDEEEEEYEEELPEGEE) is disordered. The segment covering 429–446 (GIDEEEEEYEEELPEGEE) has biased composition (acidic residues).

Belongs to the tubulin family. As to quaternary structure, dimer of alpha and beta chains. A typical microtubule is a hollow water-filled tube with an outer diameter of 25 nm and an inner diameter of 15 nM. Alpha-beta heterodimers associate head-to-tail to form protofilaments running lengthwise along the microtubule wall with the beta-tubulin subunit facing the microtubule plus end conferring a structural polarity. Microtubules usually have 13 protofilaments but different protofilament numbers can be found in some organisms and specialized cells. Mg(2+) serves as cofactor.

The protein resides in the cytoplasm. Its subcellular location is the cytoskeleton. In terms of biological role, tubulin is the major constituent of microtubules, a cylinder consisting of laterally associated linear protofilaments composed of alpha- and beta-tubulin heterodimers. Microtubules grow by the addition of GTP-tubulin dimers to the microtubule end, where a stabilizing cap forms. Below the cap, tubulin dimers are in GDP-bound state, owing to GTPase activity of alpha-tubulin. The chain is Tubulin beta chain (TUB2) from Gibberella zeae (strain ATCC MYA-4620 / CBS 123657 / FGSC 9075 / NRRL 31084 / PH-1) (Wheat head blight fungus).